Consider the following 431-residue polypeptide: UDP-N-acetylmuramate--L-alanine ligase (431 aa).

108-114 (GAHGKST) is an ATP binding site.

It belongs to the MurCDEF family.

It localises to the cytoplasm. The catalysed reaction is UDP-N-acetyl-alpha-D-muramate + L-alanine + ATP = UDP-N-acetyl-alpha-D-muramoyl-L-alanine + ADP + phosphate + H(+). It participates in cell wall biogenesis; peptidoglycan biosynthesis. In terms of biological role, cell wall formation. This chain is UDP-N-acetylmuramate--L-alanine ligase, found in Campylobacter jejuni subsp. jejuni serotype O:23/36 (strain 81-176).